We begin with the raw amino-acid sequence, 148 residues long: Large-conductance mechanosensitive channel (148 aa).

The next 2 helical transmembrane spans lie at 9–29 and 79–99; these read AFAV…GAAF and IQTV…VKAI.

This sequence belongs to the MscL family. In terms of assembly, homopentamer.

It is found in the cell inner membrane. In terms of biological role, channel that opens in response to stretch forces in the membrane lipid bilayer. May participate in the regulation of osmotic pressure changes within the cell. This is Large-conductance mechanosensitive channel from Pseudomonas savastanoi pv. phaseolicola (strain 1448A / Race 6) (Pseudomonas syringae pv. phaseolicola (strain 1448A / Race 6)).